Here is a 91-residue protein sequence, read N- to C-terminus: Acylphosphatase (91 aa).

The 87-residue stretch at arginine 5–tryptophan 91 folds into the Acylphosphatase-like domain. Active-site residues include arginine 20 and asparagine 38.

It belongs to the acylphosphatase family.

The catalysed reaction is an acyl phosphate + H2O = a carboxylate + phosphate + H(+). This Haloarcula marismortui (strain ATCC 43049 / DSM 3752 / JCM 8966 / VKM B-1809) (Halobacterium marismortui) protein is Acylphosphatase (acyP).